Here is a 321-residue protein sequence, read N- to C-terminus: Cytochrome c biogenesis protein CcsA (321 aa).

The next 8 helical transmembrane spans lie at 17-37, 43-63, 71-91, 98-118, 143-163, 225-245, 258-275, and 286-306; these read IVSIVITIHLMTLLVDGIVGL, KGMIATFLCITGFLVTRWIYS, LYESLIFLSWSFSIIHMVPKI, LSAITAPSAIFTQGFATSGLL, MVLSYAALLCGSLLSIALLVI, VISLGFIFLTIGILSGAVWAN, ETWAFITWTIFAIYLHTR, and AIVASIGFLIIWICYFGVNLL.

Belongs to the CcmF/CycK/Ccl1/NrfE/CcsA family. As to quaternary structure, may interact with Ccs1.

The protein localises to the plastid. Its subcellular location is the chloroplast thylakoid membrane. Required during biogenesis of c-type cytochromes (cytochrome c6 and cytochrome f) at the step of heme attachment. The polypeptide is Cytochrome c biogenesis protein CcsA (Platanus occidentalis (Sycamore)).